We begin with the raw amino-acid sequence, 661 residues long: UvrABC system protein B (661 aa).

In terms of domain architecture, Helicase ATP-binding spans 25–182; the sequence is AGLNSKKRSQ…SDLVNLQYER (158 aa). 38–45 serves as a coordination point for ATP; that stretch reads GITGSGKT. Residues 91–114 carry the Beta-hairpin motif; sequence YYDYYQPEAYIARTDTFIEKDSSI. One can recognise a Helicase C-terminal domain in the interval 430–592; it reads QVEDLISEIQ…IIPQTINRTI (163 aa). The UVR domain maps to 621 to 656; it reads KAHIYKLKKAMLKAASNLEFEQATKLRDQLKNLEEA.

Belongs to the UvrB family. Forms a heterotetramer with UvrA during the search for lesions. Interacts with UvrC in an incision complex.

It localises to the cytoplasm. Functionally, the UvrABC repair system catalyzes the recognition and processing of DNA lesions. A damage recognition complex composed of 2 UvrA and 2 UvrB subunits scans DNA for abnormalities. Upon binding of the UvrA(2)B(2) complex to a putative damaged site, the DNA wraps around one UvrB monomer. DNA wrap is dependent on ATP binding by UvrB and probably causes local melting of the DNA helix, facilitating insertion of UvrB beta-hairpin between the DNA strands. Then UvrB probes one DNA strand for the presence of a lesion. If a lesion is found the UvrA subunits dissociate and the UvrB-DNA preincision complex is formed. This complex is subsequently bound by UvrC and the second UvrB is released. If no lesion is found, the DNA wraps around the other UvrB subunit that will check the other stand for damage. The protein is UvrABC system protein B of Rickettsia canadensis (strain McKiel).